A 133-amino-acid polypeptide reads, in one-letter code: Peptide methionine sulfoxide reductase MsrB (133 aa).

A MsrB domain is found at 8 to 130 (LEEWRAMLDP…NSVCLDFKPR (123 aa)). C47, C50, C96, and C99 together coordinate Zn(2+). Residue C119 is the Nucleophile of the active site.

The protein belongs to the MsrB Met sulfoxide reductase family. Zn(2+) is required as a cofactor.

It catalyses the reaction L-methionyl-[protein] + [thioredoxin]-disulfide + H2O = L-methionyl-(R)-S-oxide-[protein] + [thioredoxin]-dithiol. In Pseudomonas putida (strain W619), this protein is Peptide methionine sulfoxide reductase MsrB.